The primary structure comprises 194 residues: Dof zinc finger protein DOF1.7 (194 aa).

The segment at 33–87 (LKCPRCDSPNTKFCYYNNYNLSQPRHFCKNCRRYWTKGGALRNIPVGGGTRKSNK) adopts a Dof-type zinc-finger fold. The Zn(2+) site is built by cysteine 35, cysteine 38, cysteine 60, and cysteine 63. The disordered stretch occupies residues 74–125 (RNIPVGGGTRKSNKRSGSSPSSNLKNQTVAEKPDHHGSGSEEKEERVSGQEM). Low complexity predominate over residues 88 to 99 (RSGSSPSSNLKN). The span at 104–121 (EKPDHHGSGSEEKEERVS) shows a compositional bias: basic and acidic residues.

The protein resides in the nucleus. Functionally, transcription factor that binds specifically to a 5'-AA[AG]G-3' consensus core sequence. In Arabidopsis thaliana (Mouse-ear cress), this protein is Dof zinc finger protein DOF1.7 (DOF1.7).